A 263-amino-acid polypeptide reads, in one-letter code: Glutamate/glutamine/aspartate/asparagine transport ATP-binding protein BztD (263 aa).

Residues 23 to 257 form the ABC transporter domain; that stretch reads IQISQMNKWY…PQSERTKQFL (235 aa). 55–62 provides a ligand contact to ATP; it reads GPSGSGKS.

Belongs to the ABC transporter superfamily. As to quaternary structure, bztB and BztC form a heterodimer which can form a membrane complex with a homodimer of BztD.

It localises to the cell membrane. Its function is as follows. Part of a binding-protein-dependent transport system for glutamate, glutamine, aspartate, asparagine. Probably responsible for energy coupling to the transport system. This is Glutamate/glutamine/aspartate/asparagine transport ATP-binding protein BztD (bztD) from Rhodobacter capsulatus (strain ATCC BAA-309 / NBRC 16581 / SB1003).